The primary structure comprises 368 residues: NAD(P)H-quinone oxidoreductase subunit 1, chloroplastic (368 aa).

The next 9 membrane-spanning stretches (helical) occupy residues 27-47, 97-117, 130-150, 166-186, 204-224, 249-269, 270-290, 305-325, and 348-368; these read FLWI…GVLV, WLFN…YLVI, IGVF…LMAG, AAQS…IALL, FLSW…IASL, YSGM…LVSS, LFVT…FSLF, VISI…FLFI, and FLLP…LFLL.

It belongs to the complex I subunit 1 family. As to quaternary structure, NDH is composed of at least 16 different subunits, 5 of which are encoded in the nucleus.

It localises to the plastid. Its subcellular location is the chloroplast thylakoid membrane. It carries out the reaction a plastoquinone + NADH + (n+1) H(+)(in) = a plastoquinol + NAD(+) + n H(+)(out). The catalysed reaction is a plastoquinone + NADPH + (n+1) H(+)(in) = a plastoquinol + NADP(+) + n H(+)(out). In terms of biological role, NDH shuttles electrons from NAD(P)H:plastoquinone, via FMN and iron-sulfur (Fe-S) centers, to quinones in the photosynthetic chain and possibly in a chloroplast respiratory chain. The immediate electron acceptor for the enzyme in this species is believed to be plastoquinone. Couples the redox reaction to proton translocation, and thus conserves the redox energy in a proton gradient. The polypeptide is NAD(P)H-quinone oxidoreductase subunit 1, chloroplastic (Marchantia polymorpha (Common liverwort)).